The chain runs to 375 residues: Trans-enoyl reductase cghC (375 aa).

48 to 51 (VDTK) contacts NADP(+). Substrate is bound at residue 135–142 (NAWYTSGW). NADP(+) is bound by residues 188 to 191 (SSST), 211 to 214 (SARN), and 276 to 277 (LD). Residue 297–301 (GPELV) participates in substrate binding. NADP(+) is bound at residue 366–367 (VS).

This sequence belongs to the zinc-containing alcohol dehydrogenase family. As to quaternary structure, monomer.

It catalyses the reaction (2S,4S)-4-hydroxy-4-methylglutamate + 8 malonyl-CoA + 3 S-adenosyl-L-methionine + ATP + 8 NADPH + 11 H(+) = (2S)-3-[(2S)-3,5-dioxo-4-[(2E,4R,6R,8E,10E,12E)-4,6,12-trimethyltetradeca-2,8,10,12-tetraenoyl]pyrrolidin-2-yl]-2-hydroxy-2-methylpropanoate + AMP + 3 S-adenosyl-L-homocysteine + 8 CO2 + diphosphate + 8 NADP(+) + 8 CoA + 6 H2O. It participates in secondary metabolite biosynthesis. Trans-enoyl reductase; part of the gene cluster that mediates the biosynthesis of the tetramic acid Sch210972, a potential anti-HIV fungal natural product that contains a decalin core. The PKS module of cghG together with the enoylreductase cghC catalyze the formation of the polyketide unit which is then conjugated to 4-hydroxyl-4-methyl glutamate (HMG) by the condensation domain of the cghG NRPS module. One unique structural feature of Sch210972 is the tetramic acid motif proposed to be derived from the non-proteinogenic amino acid HMG, by a Dieckmann-type condensation catalyzed by the reductase domain of cghG. The aldolase cghB catalyzes the aldol condensation of 2 molecules of pyruvic acid to yield the intermediate 4-hydroxyl-4-methyl-2-oxoglutarate (HMOG), which can then be stereoselectively transaminated by an unidentified enzyme to form HMG. The Diels-Alderase cghA then uses the Dieckmann product released by cghG as substrate and catalyzes the Diels-Alder cycloaddition to form the decalin ring of Sch210972. CghA also suppresses the nonenzymatic formation of the alternative stereoisomer. This chain is Trans-enoyl reductase cghC, found in Chaetomium globosum (strain ATCC 6205 / CBS 148.51 / DSM 1962 / NBRC 6347 / NRRL 1970) (Soil fungus).